The sequence spans 461 residues: Deoxyhypusine synthase (461 aa).

Spermidine is bound by residues 166–167, glutamate 331, histidine 377, 403–405, and 412–418; these read EH, GSD, and EAVSWGK. The Nucleophile role is filled by lysine 418. The chain crosses the membrane as a helical span at residues 428–448; that stretch reads VYSEVTIVFPLIVVHVFVAWV.

Belongs to the deoxyhypusine synthase family. As to quaternary structure, heterotetramer formed by a homodimer of the non-catalytic regulatory subunit DHSp and a homodimer of the catalytic subunit DHSc where DHSc appears to bind spermidine and DHSp appears to bind NAD(+). NAD(+) is required as a cofactor.

Its subcellular location is the membrane. It catalyses the reaction [eIF5A protein]-L-lysine + spermidine = [eIF5A protein]-deoxyhypusine + propane-1,3-diamine. It functions in the pathway protein modification; eIF5A hypusination. Its activity is regulated as follows. Allosterically activated by DHSp. Inhibited by spermididine analog N1-guanyl-1,7-diamineoheptane (GC7). In terms of biological role, in association with the non-catalytic regulatory subunit DHSp, catalyzes the NAD-dependent oxidative cleavage of spermidine and the subsequent transfer of the butylamine moiety of spermidine to the epsilon-amino group of a specific lysine residue of the eIF5A precursor protein to form the intermediate deoxyhypusine residue. Regulates protein levels of its regulatory subunit DHSp. Required for cell growth and survival. The protein is Deoxyhypusine synthase of Trypanosoma brucei brucei (strain 927/4 GUTat10.1).